The primary structure comprises 190 residues: MGLNDTLVAPRSRGIIDPNTGNPVGANDPFYGAINEELSDKGFLVTSSEALITWARTGSLMWMTFGLACCAVEMMHTSMPRYDAERFGIAPRASPRQSDVMIVAGTLTNKMAPALRKVYDQMPEPRYVISMGSCANGGGYYHYSYSVVRGCDRIVPVDIYVPGCPPTAEALLYGILLLQKKIRRTGTIER.

The [4Fe-4S] cluster site is built by cysteine 69, cysteine 70, cysteine 134, and cysteine 164.

Belongs to the complex I 20 kDa subunit family. As to quaternary structure, NDH-1 is composed of 14 different subunits. Subunits NuoB, C, D, E, F, and G constitute the peripheral sector of the complex. [4Fe-4S] cluster is required as a cofactor.

The protein localises to the cell inner membrane. It catalyses the reaction a quinone + NADH + 5 H(+)(in) = a quinol + NAD(+) + 4 H(+)(out). In terms of biological role, NDH-1 shuttles electrons from NADH, via FMN and iron-sulfur (Fe-S) centers, to quinones in the respiratory chain. Couples the redox reaction to proton translocation (for every two electrons transferred, four hydrogen ions are translocated across the cytoplasmic membrane), and thus conserves the redox energy in a proton gradient. The polypeptide is NADH-quinone oxidoreductase subunit B (Chelativorans sp. (strain BNC1)).